Here is a 403-residue protein sequence, read N- to C-terminus: Pyruvate, phosphate dikinase regulatory protein 1, chloroplastic (403 aa).

Residues 1–86 (MALLSAMKLQ…NTTGPMRPIE (86 aa)) constitute a chloroplast transit peptide. Positions 1-108 (MALLSAMKLQ…DVSSSSNGVS (108 aa)) are disordered. Composition is skewed to low complexity over residues 17–26 (SSNLNPNSKP), 69–80 (STITNGSNNTTG), and 87–108 (SSSR…NGVS). An ADP-binding site is contributed by 269–276 (GVSRTGKT).

Belongs to the pyruvate, phosphate/water dikinase regulatory protein family. PDRP subfamily. Interacts with PPDK1. Expressed in green tissues.

It is found in the plastid. The protein localises to the chloroplast stroma. It catalyses the reaction N(tele)-phospho-L-histidyl/L-threonyl-[pyruvate, phosphate dikinase] + ADP = N(tele)-phospho-L-histidyl/O-phospho-L-threonyl-[pyruvate, phosphate dikinase] + AMP + H(+). It carries out the reaction N(tele)-phospho-L-histidyl/O-phospho-L-threonyl-[pyruvate, phosphate dikinase] + phosphate + H(+) = N(tele)-phospho-L-histidyl/L-threonyl-[pyruvate, phosphate dikinase] + diphosphate. With respect to regulation, regulated by light/dark exposure. Bifunctional serine/threonine kinase and phosphorylase involved in the dark/light-mediated regulation of PPDK by catalyzing its phosphorylation/dephosphorylation. Dark/light-induced changes in stromal concentrations of the competing ADP and Pi substrates govern the direction of the reaction. In the dark, phosphorylates the catalytic intermediate of PPDK (PPDK-HisP), inactivating it. Light exposure induces the phosphorolysis reaction that reactivates PPDK. Unlike the kinase function which can utilize either Thr or Ser as target, the phosphorylase function has a strict substrate requirement for threonyl phosphate. This Arabidopsis thaliana (Mouse-ear cress) protein is Pyruvate, phosphate dikinase regulatory protein 1, chloroplastic (RP1).